The primary structure comprises 70 residues: DNA-directed RNA polymerase subunit omega (70 aa).

This sequence belongs to the RNA polymerase subunit omega family. As to quaternary structure, the RNAP catalytic core consists of 2 alpha, 1 beta, 1 beta' and 1 omega subunit. When a sigma factor is associated with the core the holoenzyme is formed, which can initiate transcription.

It carries out the reaction RNA(n) + a ribonucleoside 5'-triphosphate = RNA(n+1) + diphosphate. Functionally, promotes RNA polymerase assembly. Latches the N- and C-terminal regions of the beta' subunit thereby facilitating its interaction with the beta and alpha subunits. The polypeptide is DNA-directed RNA polymerase subunit omega (Bacillus cereus (strain G9842)).